Reading from the N-terminus, the 519-residue chain is Chaperone SurA (519 aa).

Residues 1 to 31 (MMRSLHSLRRMSGTVLALMLAAGLPLSAAQA) form the signal peptide. Low complexity-rich tracts occupy residues 31–45 (AQPA…QKPA) and 197–207 (PAAAQATRAPA). 2 disordered regions span residues 31–50 (AQPA…PAPS) and 196–221 (NPAA…PAQS). In terms of domain architecture, PpiC 1 spans 223-324 (PAMLVLAQIL…NGFHILKVVD (102 aa)). The tract at residues 328 to 361 (GGQPAQAARPAPAPAPQQPSSFQEGPSVAAPQGP) is disordered. Residues 364 to 463 (VTQTHARHIL…FGWHLIQVLE (100 aa)) enclose the PpiC 2 domain.

It is found in the periplasm. It catalyses the reaction [protein]-peptidylproline (omega=180) = [protein]-peptidylproline (omega=0). Its function is as follows. Chaperone involved in the correct folding and assembly of outer membrane proteins. Recognizes specific patterns of aromatic residues and the orientation of their side chains, which are found more frequently in integral outer membrane proteins. May act in both early periplasmic and late outer membrane-associated steps of protein maturation. This Bordetella pertussis (strain Tohama I / ATCC BAA-589 / NCTC 13251) protein is Chaperone SurA.